A 122-amino-acid polypeptide reads, in one-letter code: Large ribosomal subunit protein uL14c (122 aa).

It belongs to the universal ribosomal protein uL14 family. As to quaternary structure, part of the 50S ribosomal subunit.

It is found in the plastid. The protein resides in the chloroplast. Its function is as follows. Binds to 23S rRNA. This chain is Large ribosomal subunit protein uL14c, found in Jasminum nudiflorum (Winter jasmine).